Reading from the N-terminus, the 323-residue chain is uncharacterized protein (323 aa).

Belongs to the glycosyltransferase 2 family.

This is an uncharacterized protein from Haemophilus influenzae (strain ATCC 51907 / DSM 11121 / KW20 / Rd).